A 44-amino-acid chain; its full sequence is Conotoxin S5.1 (44 aa).

Post-translationally, contains 3 disulfide bonds. As to expression, expressed by the venom duct.

The protein resides in the secreted. This Conus striatus (Striated cone) protein is Conotoxin S5.1.